The chain runs to 383 residues: Galactokinase (383 aa).

34–37 serves as a coordination point for substrate; the sequence is EHTD. 124–130 is a binding site for ATP; it reads GAGLSSS. Mg(2+)-binding residues include S130 and E162. Residue D174 is the Proton acceptor of the active site. Y223 is a binding site for substrate.

It belongs to the GHMP kinase family. GalK subfamily.

Its subcellular location is the cytoplasm. It carries out the reaction alpha-D-galactose + ATP = alpha-D-galactose 1-phosphate + ADP + H(+). It functions in the pathway carbohydrate metabolism; galactose metabolism. Functionally, catalyzes the transfer of the gamma-phosphate of ATP to D-galactose to form alpha-D-galactose-1-phosphate (Gal-1-P). The polypeptide is Galactokinase (Yersinia pseudotuberculosis serotype IB (strain PB1/+)).